The following is a 202-amino-acid chain: Ras-related protein RABD2c (202 aa).

GTP-binding positions include 15–23 (GDSGVGKSC), 33–40 (YLDSYIST), 63–67 (DTAGQ), 121–124 (NKCD), and 151–153 (SAK). The short motif at 37-45 (YISTIGVDF) is the Effector region element. The disordered stretch occupies residues 174–202 (ASQPAGGSKPPTVQIRGQPVNQQSGCCSS). Positions 192–202 (PVNQQSGCCSS) are enriched in polar residues. S-geranylgeranyl cysteine attachment occurs at residues Cys-199 and Cys-200.

Belongs to the small GTPase superfamily. Rab family.

It is found in the cell membrane. It localises to the golgi apparatus. The protein localises to the trans-Golgi network membrane. Its subcellular location is the golgi apparatus membrane. Protein transport. Regulator of membrane traffic from the Golgi apparatus towards the endoplasmic reticulum (ER). The polypeptide is Ras-related protein RABD2c (RABD2C) (Arabidopsis thaliana (Mouse-ear cress)).